A 1501-amino-acid chain; its full sequence is EF-hand calcium-binding domain-containing protein 6 (1501 aa).

A disordered region spans residues 18-47 (RKFTHSRPHSSPCRVYSRNGSPNKFRSSST). Residues 35–47 (RNGSPNKFRSSST) are compositionally biased toward polar residues. EF-hand domains follow at residues 70–105 (DRGD…FLMP), 172–207 (KNIK…FCMK), 297–332 (KSYE…FVYQ), 403–438 (DHSA…MAVK), 439–474 (LSDS…NCRM), 504–539 (RNLQ…FCPF), and 634–669 (QQDP…TGMP). Residues 699–718 (EDPPMRGPETTPPQPPTPSK) are disordered. 7 EF-hand domains span residues 741-776 (ESFR…LLLN), 847-882 (NRWS…FDIP), 883-918 (LTPR…NYSP), 964-999 (DRHQ…CGCS), 1069-1104 (SSQL…FCYK), 1176-1211 (SHYH…RVQI), and 1212-1247 (LTDE…ETAA). Aspartate 754, aspartate 756, aspartate 758, and aspartate 765 together coordinate Ca(2+). Threonine 884 is modified (phosphothreonine). The segment at 1246–1307 (AATPMATGDS…TTVIPGTPPL (62 aa)) is disordered. Polar residues-rich tracts occupy residues 1270–1279 (GTRSALSLPT) and 1286–1301 (SKSQ…TTVI). Position 1290 is a phosphoserine (serine 1290). Threonine 1294 and threonine 1304 each carry phosphothreonine. The segment at 1303 to 1501 (GTPPLQNCDP…YNDFLRAFLQ (199 aa)) is interaction with PARK7. EF-hand domains follow at residues 1359-1394 (ISKE…LLKA), 1434-1469 (HCWR…YSIN), and 1470-1501 (LSEE…AFLQ). The interaction with AR stretch occupies residues 1407–1501 (NAHKMKEAGA…YNDFLRAFLQ (95 aa)).

As to quaternary structure, microtubule inner protein component of sperm flagellar doublet microtubules. Binds PARK7. Part of a ternary complex containing PARK7, EFCAB6/DJBP and AR. As to expression, specifically expressed in the testis.

The protein localises to the nucleus. The protein resides in the cytoplasm. It localises to the cytoskeleton. It is found in the flagellum axoneme. Functionally, negatively regulates the androgen receptor by recruiting histone deacetylase complex, and protein DJ-1 antagonizes this inhibition by abrogation of this complex. Microtubule inner protein (MIP) part of the dynein-decorated doublet microtubules (DMTs) in cilia axoneme, which is required for motile cilia beating. The protein is EF-hand calcium-binding domain-containing protein 6 of Homo sapiens (Human).